A 702-amino-acid polypeptide reads, in one-letter code: Polyphosphate kinase (702 aa).

Asn-55 serves as a coordination point for ATP. Arg-389 and Arg-419 together coordinate Mg(2+). Catalysis depends on His-449, which acts as the Phosphohistidine intermediate. ATP-binding residues include Tyr-482, Arg-578, and His-606.

The protein belongs to the polyphosphate kinase 1 (PPK1) family. Mg(2+) is required as a cofactor. Post-translationally, an intermediate of this reaction is the autophosphorylated ppk in which a phosphate is covalently linked to a histidine residue through a N-P bond.

The catalysed reaction is [phosphate](n) + ATP = [phosphate](n+1) + ADP. Catalyzes the reversible transfer of the terminal phosphate of ATP to form a long-chain polyphosphate (polyP). The chain is Polyphosphate kinase from Bacillus anthracis.